The chain runs to 538 residues: ATP synthase subunit beta 2 (538 aa).

The segment covering 1-10 (MADPQATNGT) has biased composition (polar residues). Residues 1–30 (MADPQATNGTGAACAERDASDVGDVSDVGD) form a disordered region. Position 185-192 (185-192 (GGAGVGKT)) interacts with ATP. Positions 494 to 505 (AAAREADARREA) are enriched in basic and acidic residues. The tract at residues 494-538 (AAAREADARREAAAAASVAGPGTTSGTTSDPASGSAEPQGARHGR) is disordered. The span at 506–529 (AAAASVAGPGTTSGTTSDPASGSA) shows a compositional bias: low complexity.

This sequence belongs to the ATPase alpha/beta chains family. F-type ATPases have 2 components, CF(1) - the catalytic core - and CF(0) - the membrane proton channel. CF(1) has five subunits: alpha(3), beta(3), gamma(1), delta(1), epsilon(1). CF(0) has three main subunits: a(1), b(2) and c(9-12). The alpha and beta chains form an alternating ring which encloses part of the gamma chain. CF(1) is attached to CF(0) by a central stalk formed by the gamma and epsilon chains, while a peripheral stalk is formed by the delta and b chains.

Its subcellular location is the cell inner membrane. It carries out the reaction ATP + H2O + 4 H(+)(in) = ADP + phosphate + 5 H(+)(out). Functionally, produces ATP from ADP in the presence of a proton gradient across the membrane. The catalytic sites are hosted primarily by the beta subunits. In Burkholderia pseudomallei (strain K96243), this protein is ATP synthase subunit beta 2.